Consider the following 478-residue polypeptide: Pyrrolysine--tRNA ligase (478 aa).

The interval 106–188 is disordered; that stretch reads VMPKSVARTP…TSAMPASTSA (83 aa). Over residues 122–132 the composition is skewed to polar residues; sequence APVQTLPSESQ. A compositionally biased stretch (low complexity) spans 133–188; that stretch reads PAPTTPISASTTAPASTSTTAPAPASTTAPAPASTTAPASASTTISTSAMPASTSA.

Belongs to the class-II aminoacyl-tRNA synthetase family.

It is found in the cytoplasm. The catalysed reaction is tRNA(Pyl) + L-pyrrolysine + ATP = L-pyrrolysyl-tRNA(Pyl) + AMP + diphosphate. Functionally, catalyzes the attachment of pyrrolysine to tRNA(Pyl). Pyrrolysine is a lysine derivative encoded by the termination codon UAG. The sequence is that of Pyrrolysine--tRNA ligase from Methanosarcina thermophila.